Consider the following 339-residue polypeptide: Cyclic AMP-dependent transcription factor ATF-4 (339 aa).

3 disordered regions span residues 14–62 (GPWP…PSEL), 153–182 (PEEI…HTEV), and 209–313 (QNIS…EKAD). Over residues 35-55 (VLEGSWSPSSSSLSSFSPPAS) the composition is skewed to low complexity. The segment covering 162–173 (SPAPSVPSPPEE) has biased composition (pro residues). The segment covering 211-226 (ISDCSDSDSGISVSGS) has biased composition (low complexity). A compositionally biased stretch (basic and acidic residues) spans 231-247 (SDLEPSSRAKPYSRPDP). The region spanning 266-329 (VEKKLKKMEQ…QYLRDLLEEM (64 aa)) is the bZIP domain. The segment at 268–288 (KKLKKMEQNKTAATRYRQKKR) is basic motif. Positions 294 to 322 (LNSECSELEKKNRELSEKADSLSREIQYL) are leucine-zipper. The segment covering 300 to 313 (ELEKKNRELSEKAD) has biased composition (basic and acidic residues).

This sequence belongs to the bZIP family. Binds DNA as a homodimer and as a heterodimer.

It is found in the nucleus. Functionally, transcription factor that binds the cAMP response element (CRE) (consensus: 5'-GTGACGT[AC][AG]-3') and displays two biological functions, as regulator of metabolic and redox processes under normal cellular conditions, and as master transcription factor during integrated stress response (ISR). Binds to asymmetric CRE's as a heterodimer and to palindromic CRE's as a homodimer. Core effector of the ISR, which is required for adaptation to various stress such as endoplasmic reticulum (ER) stress, amino acid starvation, mitochondrial stress or oxidative stress. During ISR, atf4 translation is induced via an alternative ribosome translation re-initiation mechanism in response to eif2s1/eIF-2-alpha phosphorylation, and stress-induced atf4 acts as a master transcription factor of stress-responsive genes in order to promote cell recovery. Promotes the transcription of genes linked to amino acid sufficiency and resistance to oxidative stress to protect cells against metabolic consequences of ER oxidation. In the absence of stress, atf4 translation is at low levels and it is required for normal metabolic processes such as embryonic lens formation, fetal liver hematopoiesis, bone development and synaptic plasticity. Acts as a regulator of osteoblast differentiation by promoting expression of osteoblast-specific genes. Regulates the circadian expression of the core clock components. Mainly acts as a transcriptional activator in cellular stress adaptation, but it can also act as a transcriptional repressor. The chain is Cyclic AMP-dependent transcription factor ATF-4 (atf4) from Danio rerio (Zebrafish).